Here is a 1035-residue protein sequence, read N- to C-terminus: Condensin complex subunit 3 (1035 aa).

HEAT repeat units lie at residues 113-150 (RFVD…NIGE) and 153-191 (ESLF…EEQT). Position 198 is a phosphoserine (Ser-198). An HEAT 3 repeat occupies 201–239 (EENFEATRTLVASIQNDPSAEVRRAAMLNLINDNNTRPY). Positions 500-536 (EEKIKSKKINRRNETSVDEEDENGTHNDEVNEDEEDD) are disordered. HEAT repeat units follow at residues 597 to 635 (ILIA…LDVK) and 827 to 864 (VQLT…SSEQ). Residues 909-919 (ERSETQTKDEN) are compositionally biased toward basic and acidic residues. Disordered stretches follow at residues 909–934 (ERSE…GNSF) and 959–995 (TTVN…LENM). 2 stretches are compositionally biased toward polar residues: residues 920-934 (NTAN…GNSF) and 959-973 (TTVN…TEQS). Ser-933 carries the post-translational modification Phosphoserine. Ser-981 carries the phosphoserine modification. A compositionally biased stretch (polar residues) spans 986-995 (IDTSKNLENM). Ser-1008 is modified (phosphoserine). The segment at 1012 to 1035 (PDEKSDAMSIDEEDKDSESFSEVC) is disordered.

The protein belongs to the CND3 (condensin subunit 3) family. Component of the condensin complex, which contains the SMC2 and SMC4 heterodimer, and three non SMC subunits that probably regulate the complex: BRN1, YCS4 and YCG1/YCS5.

It is found in the nucleus. The protein resides in the cytoplasm. Its subcellular location is the chromosome. Regulatory subunit of the condensin complex, a complex required for conversion of interphase chromatin into mitotic-like condense chromosomes. The condensin complex probably introduces positive supercoils into relaxed DNA in the presence of type I topoisomerases and converts nicked DNA into positive knotted forms in the presence of type II topoisomerases. The condensin complex probably also plays a role during interphase. The chain is Condensin complex subunit 3 (YCG1) from Saccharomyces cerevisiae (strain ATCC 204508 / S288c) (Baker's yeast).